The sequence spans 234 residues: Small ribosomal subunit protein uS2 (234 aa).

This sequence belongs to the universal ribosomal protein uS2 family.

The polypeptide is Small ribosomal subunit protein uS2 (Prochlorococcus marinus (strain MIT 9515)).